Reading from the N-terminus, the 353-residue chain is Histidinol-phosphate aminotransferase (353 aa).

K211 is subject to N6-(pyridoxal phosphate)lysine.

Belongs to the class-II pyridoxal-phosphate-dependent aminotransferase family. Histidinol-phosphate aminotransferase subfamily. As to quaternary structure, homodimer. Pyridoxal 5'-phosphate serves as cofactor.

It carries out the reaction L-histidinol phosphate + 2-oxoglutarate = 3-(imidazol-4-yl)-2-oxopropyl phosphate + L-glutamate. Its pathway is amino-acid biosynthesis; L-histidine biosynthesis; L-histidine from 5-phospho-alpha-D-ribose 1-diphosphate: step 7/9. The protein is Histidinol-phosphate aminotransferase of Marinomonas sp. (strain MWYL1).